We begin with the raw amino-acid sequence, 172 residues long: DCC family protein At1g52590, chloroplastic (172 aa).

The transit peptide at 1–25 (MAILIPASFGRLTITSRAQVRVRVS) directs the protein to the chloroplast.

This sequence belongs to the DCC thiol-disulfide oxidoreductase family.

The protein resides in the plastid. It localises to the chloroplast. This is DCC family protein At1g52590, chloroplastic from Arabidopsis thaliana (Mouse-ear cress).